A 194-amino-acid chain; its full sequence is Adenine phosphoribosyltransferase (194 aa).

This sequence belongs to the purine/pyrimidine phosphoribosyltransferase family. As to quaternary structure, homodimer.

It localises to the cytoplasm. The enzyme catalyses AMP + diphosphate = 5-phospho-alpha-D-ribose 1-diphosphate + adenine. It participates in purine metabolism; AMP biosynthesis via salvage pathway; AMP from adenine: step 1/1. Catalyzes a salvage reaction resulting in the formation of AMP, that is energically less costly than de novo synthesis. The chain is Adenine phosphoribosyltransferase from Albidiferax ferrireducens (strain ATCC BAA-621 / DSM 15236 / T118) (Rhodoferax ferrireducens).